The sequence spans 407 residues: tRNA(Ile2) 2-agmatinylcytidine synthetase TiaS (407 aa).

It belongs to the TiaS family.

Its subcellular location is the cytoplasm. The catalysed reaction is cytidine(34) in tRNA(Ile2) + agmatine + ATP + H2O = 2-agmatinylcytidine(34) in tRNA(Ile2) + AMP + 2 phosphate + 2 H(+). In terms of biological role, ATP-dependent agmatine transferase that catalyzes the formation of 2-agmatinylcytidine (agm2C) at the wobble position (C34) of tRNA(Ile2), converting the codon specificity from AUG to AUA. The protein is tRNA(Ile2) 2-agmatinylcytidine synthetase TiaS of Caldivirga maquilingensis (strain ATCC 700844 / DSM 13496 / JCM 10307 / IC-167).